We begin with the raw amino-acid sequence, 367 residues long: UDP-N-acetylglucosamine--N-acetylmuramyl-(pentapeptide) pyrophosphoryl-undecaprenol N-acetylglucosamine transferase (367 aa).

UDP-N-acetyl-alpha-D-glucosamine is bound by residues 18–20, Asn130, Arg170, Ser196, Ile252, 271–276, and Gln297; these read TGG and ALTVSE.

This sequence belongs to the glycosyltransferase 28 family. MurG subfamily.

It is found in the cell inner membrane. The enzyme catalyses di-trans,octa-cis-undecaprenyl diphospho-N-acetyl-alpha-D-muramoyl-L-alanyl-D-glutamyl-meso-2,6-diaminopimeloyl-D-alanyl-D-alanine + UDP-N-acetyl-alpha-D-glucosamine = di-trans,octa-cis-undecaprenyl diphospho-[N-acetyl-alpha-D-glucosaminyl-(1-&gt;4)]-N-acetyl-alpha-D-muramoyl-L-alanyl-D-glutamyl-meso-2,6-diaminopimeloyl-D-alanyl-D-alanine + UDP + H(+). It participates in cell wall biogenesis; peptidoglycan biosynthesis. Functionally, cell wall formation. Catalyzes the transfer of a GlcNAc subunit on undecaprenyl-pyrophosphoryl-MurNAc-pentapeptide (lipid intermediate I) to form undecaprenyl-pyrophosphoryl-MurNAc-(pentapeptide)GlcNAc (lipid intermediate II). The protein is UDP-N-acetylglucosamine--N-acetylmuramyl-(pentapeptide) pyrophosphoryl-undecaprenol N-acetylglucosamine transferase of Shewanella frigidimarina (strain NCIMB 400).